Here is a 185-residue protein sequence, read N- to C-terminus: Translation initiation factor IF-3, chloroplastic (185 aa).

The protein belongs to the IF-3 family. As to quaternary structure, monomer.

Its subcellular location is the plastid. It localises to the chloroplast. Its function is as follows. IF-3 binds to the 30S ribosomal subunit and shifts the equilibrium between 70S ribosomes and their 50S and 30S subunits in favor of the free subunits, thus enhancing the availability of 30S subunits on which protein synthesis initiation begins. In Cyanidium caldarium (Red alga), this protein is Translation initiation factor IF-3, chloroplastic.